Consider the following 337-residue polypeptide: Cytoskeleton protein RodZ (337 aa).

The Cytoplasmic portion of the chain corresponds to 1-111 (MNTEATHDQN…LGKRRKKRDG (111 aa)). Residues 19–71 (LRNAREQLGLSQQAVAERLCLKVSTVRDIEEDKAPADLASTFLRGYIRSYARL) enclose the HTH cro/C1-type domain. Positions 30–49 (QQAVAERLCLKVSTVRDIEE) form a DNA-binding region, H-T-H motif. Residues 112-132 (WLMTFTWLVLFVVIGLSGAWW) form a helical; Signal-anchor for type II membrane protein membrane-spanning segment. The Periplasmic segment spans residues 133–337 (WQDHKAQQEE…TLNAEQSPAQ (205 aa)). Positions 145 to 167 (TMADQSSAELSSNSEQGQSVPLN) are enriched in polar residues. A disordered region spans residues 145-220 (TMADQSSAEL…VSPSQANVDT (76 aa)). The span at 168 to 207 (TSTTTDPATTSTPPASVDTTATNTQTPAVTAPAPAVDPQQ) shows a compositional bias: low complexity. A compositionally biased stretch (polar residues) spans 208 to 218 (NAVVSPSQANV).

The protein belongs to the RodZ family.

Its subcellular location is the cell inner membrane. In terms of biological role, cytoskeletal protein that is involved in cell-shape control through regulation of the length of the long axis. In Escherichia coli O17:K52:H18 (strain UMN026 / ExPEC), this protein is Cytoskeleton protein RodZ.